The primary structure comprises 294 residues: UDP-3-O-acyl-N-acetylglucosamine deacetylase (294 aa).

The Zn(2+) site is built by His-75, His-232, and Asp-236. The Proton donor role is filled by His-259.

Belongs to the LpxC family. The cofactor is Zn(2+).

The enzyme catalyses a UDP-3-O-[(3R)-3-hydroxyacyl]-N-acetyl-alpha-D-glucosamine + H2O = a UDP-3-O-[(3R)-3-hydroxyacyl]-alpha-D-glucosamine + acetate. It participates in glycolipid biosynthesis; lipid IV(A) biosynthesis; lipid IV(A) from (3R)-3-hydroxytetradecanoyl-[acyl-carrier-protein] and UDP-N-acetyl-alpha-D-glucosamine: step 2/6. Functionally, catalyzes the hydrolysis of UDP-3-O-myristoyl-N-acetylglucosamine to form UDP-3-O-myristoylglucosamine and acetate, the committed step in lipid A biosynthesis. The polypeptide is UDP-3-O-acyl-N-acetylglucosamine deacetylase (Campylobacter jejuni (strain RM1221)).